The chain runs to 297 residues: Acetaldehyde dehydrogenase (297 aa).

15-18 (SGSI) is an NAD(+) binding site. Cysteine 130 functions as the Acyl-thioester intermediate in the catalytic mechanism. NAD(+) is bound by residues 162–170 (SAGIATREN) and asparagine 272.

It belongs to the acetaldehyde dehydrogenase family.

It carries out the reaction acetaldehyde + NAD(+) + CoA = acetyl-CoA + NADH + H(+). The sequence is that of Acetaldehyde dehydrogenase (mhpF) from Burkholderia pseudomallei (strain K96243).